Consider the following 197-residue polypeptide: uncharacterized protein (197 aa).

Disordered stretches follow at residues Met1 to Val30 and Pro115 to Leu174. Over residues Lys21–Val30 the composition is skewed to low complexity. Positions Lys123–Glu137 are enriched in acidic residues. Positions Lys157–Ser170 are enriched in basic residues.

This is an uncharacterized protein from Dictyostelium discoideum (Social amoeba).